The primary structure comprises 493 residues: MTLRFYDTATAEVRDFAPLVEGKASLYYCGATVQSEPHIGHLRSALVFDQLTRWLQFRGFQTTVVRNVTDIDDKILAKAAEAGEEWWARAYKYEQQFNAAYDKLGITRPDYEPRATGNISEMHSLIQDLIDRGHAYPAPDGSGDVYFDVRSWGKYGSLTHQNIDDMQAAADADPRGKKDARDFALWKGRKPEEPTTASWPSPWGAGRPGWHLECSAMVGKYLGDAFDIHGGGLDLRFPHHENEMAQSQAAGRPFANFWMHNGLVAYQGEKMSKSIGNVIGPGELFAQASPRVVRYYLGQAHYRSVLDYSPESLEEAAAALARIDGFLVNAGANVQRVEVEDSGHMYLPPAAKQGFGWFAYAPLSDTPAAFVEAMDDDLNVPKALAVLHETVRAGNSAIASSDLVELQKKFEAVLAMLDVLGLSSIATDQAADNGSTHALETLVQTRLQERQQARTEKNWARSDEIRDELAEAGIKIEDSSNGATWSIERKQQR.

A Zn(2+)-binding site is contributed by C29. A 'HIGH' region motif is present at residues 31-41 (ATVQSEPHIGH). C214, H239, and E243 together coordinate Zn(2+). A 'KMSKS' region motif is present at residues 270 to 274 (KMSKS). K273 is an ATP binding site.

Belongs to the class-I aminoacyl-tRNA synthetase family. As to quaternary structure, monomer. It depends on Zn(2+) as a cofactor.

It localises to the cytoplasm. The enzyme catalyses tRNA(Cys) + L-cysteine + ATP = L-cysteinyl-tRNA(Cys) + AMP + diphosphate. This is Cysteine--tRNA ligase from Renibacterium salmoninarum (strain ATCC 33209 / DSM 20767 / JCM 11484 / NBRC 15589 / NCIMB 2235).